The chain runs to 98 residues: NADH-ubiquinone oxidoreductase chain 4L (98 aa).

Helical transmembrane passes span 1–21 (MTLI…GLLM), 29–49 (ALLC…LTIL), and 61–81 (IILL…LVMV).

The protein belongs to the complex I subunit 4L family. Core subunit of respiratory chain NADH dehydrogenase (Complex I) which is composed of 45 different subunits.

It localises to the mitochondrion inner membrane. The enzyme catalyses a ubiquinone + NADH + 5 H(+)(in) = a ubiquinol + NAD(+) + 4 H(+)(out). Its function is as follows. Core subunit of the mitochondrial membrane respiratory chain NADH dehydrogenase (Complex I) which catalyzes electron transfer from NADH through the respiratory chain, using ubiquinone as an electron acceptor. Part of the enzyme membrane arm which is embedded in the lipid bilayer and involved in proton translocation. This is NADH-ubiquinone oxidoreductase chain 4L (MT-ND4L) from Eschrichtius robustus (California gray whale).